Consider the following 481-residue polypeptide: MKNGVKQLFLLSLIGLSLTNVAWAEVARPKNDTLTNTIQSAELKTSSFSSMPKKEIPNRHIISLSKSQLAHHPRLVLRGLIPALYQNNTQAVQLLLPLYKQFPQQDNFLLTWAKAIEAREQGDLTQSIAYYRELFARDASLLPLRYQLAQALFFNYENEAAKIQFEKLRTEVDDEKFLGVIDQYLLTLNQRNQWIWQVGLNFLNDDNLNNAPKSGTKIGSWTAWEKESGQGVGYSLSVEKKWPWADHFFSKTMFNGNGKYYWDNKKYNEATVRIGGGLGYQTASVEVSLFPFQEKRWYAGGSSGTNTMKQYADKLGIRLENVDWLSKTWQISTALEYGESRYKIRKHLDGNYYFVSSTLFYLPKSTQFWFVGMDFHRENTQALDNAYQQKTLRLGWGQDWFYGISSRLTFSYANRVYREKDLIGIQQKNREYTTTITLWHRNIHFMGLTPKLSWDYQKSTSNHAFYRYDKNRIYLEIGKIF.

The signal sequence occupies residues 1–24 (MKNGVKQLFLLSLIGLSLTNVAWA). The N-terminal domain stretch occupies residues 24–192 (AEVARPKNDT…QYLLTLNQRN (169 aa)). The C-terminal probable beta barrel stretch occupies residues 193-481 (QWIWQVGLNF…RIYLEIGKIF (289 aa)). 14 beta stranded membrane passes run 194–204 (WIWQVGLNFLN), 223–243 (AWEKESGQGVGYSLSVEKKWP), 248–257 (FFSKTMFNGN), 271–281 (TVRIGGGLGYQ), 285–295 (VEVSLFPFQEK), 315–325 (LGIRLENVDWL), 329–339 (WQISTALEYGE), 353–363 (YFVSSTLFYLP), 368–377 (FWFVGMDFHR), 390–399 (KTLRLGWGQD), 404–414 (ISSRLTFSYAN), 432–441 (YTTTITLWHR), 448–458 (LTPKLSWDYQK), and 471–481 (NRIYLEIGKIF).

This sequence belongs to the Slam family.

The protein localises to the cell outer membrane. Functionally, required for correct export to the cell surface of some cell outer membrane lipoproteins. The sequence is that of Surface lipoprotein assembly modifier 2 from Haemophilus influenzae (strain ATCC 51907 / DSM 11121 / KW20 / Rd).